A 197-amino-acid polypeptide reads, in one-letter code: UPF0725 protein At5g41640 (197 aa).

Belongs to the UPF0725 (EMB2204) family.

The protein is UPF0725 protein At5g41640 of Arabidopsis thaliana (Mouse-ear cress).